A 473-amino-acid chain; its full sequence is Ribulose bisphosphate carboxylase large chain (473 aa).

A necessary and sufficient to target proteins to carboxysomes, interacts with shell proteins region spans residues methionine 1–alanine 136. Residues asparagine 116 and threonine 166 each coordinate substrate. Lysine 168 acts as the Proton acceptor in catalysis. Lysine 170 contributes to the substrate binding site. The Mg(2+) site is built by lysine 194, aspartate 196, and glutamate 197. Lysine 194 is subject to N6-carboxylysine. Histidine 287 (proton acceptor) is an active-site residue. Substrate-binding residues include arginine 288, histidine 320, and serine 372.

The protein belongs to the RuBisCO large chain family. Type I subfamily. As to quaternary structure, heterohexadecamer of 8 large chains and 8 small chains. Forms a CsoS2-CsoS1-RuBisCO complex. The N-terminus (residues 1-136) interacts with shell proteins CsoS1A, CsoS1B and CsoS1C. Holo-RuBisCO interacts with the N-terminal repeats of CsoS2; binding is sensitive to ionic strength. A fusion of a single N-terminal repeat to the C-terminus of the large subunit of RuBisCO (cbbL) shows the repeat can lie between a CbbL dimer, making minor contacts to CbbS; thus each RuBisCO holoenzyme could bind 8 repeats. It depends on Mg(2+) as a cofactor.

Its subcellular location is the carboxysome. The catalysed reaction is 2 (2R)-3-phosphoglycerate + 2 H(+) = D-ribulose 1,5-bisphosphate + CO2 + H2O. It carries out the reaction D-ribulose 1,5-bisphosphate + O2 = 2-phosphoglycolate + (2R)-3-phosphoglycerate + 2 H(+). In terms of biological role, ruBisCO catalyzes two reactions: the carboxylation of D-ribulose 1,5-bisphosphate, the primary event in carbon dioxide fixation, as well as the oxidative fragmentation of the pentose substrate. Both reactions occur simultaneously and in competition at the same active site. There are estimated to be 270 RuBisCO heterohexadecamers per carboxysome. Alpha-carboxysomes are able to assemble in the absence of RuBisCO, unlike beta-carboxysomes. The RuBisCO large subunit is required for enzyme integration into carboxysomes; replacing it with the carboxysomally targeted gene (Tcr_0838, AC Q31HD9) of H.crungenus places RuBisCO in the carboxysome, while the non-carboxysomal large subunit of H.crungenus (Tcr_0427, AC Q31IK0) is not incorporated in the carboxysome. This is Ribulose bisphosphate carboxylase large chain from Halothiobacillus neapolitanus (strain ATCC 23641 / c2) (Thiobacillus neapolitanus).